A 79-amino-acid polypeptide reads, in one-letter code: Cell division protein ZapB (79 aa).

Residues 4–78 (EVFEKLESKV…LRALLGKMEE (75 aa)) are a coiled coil.

This sequence belongs to the ZapB family. In terms of assembly, homodimer. The ends of the coiled-coil dimer bind to each other, forming polymers. Interacts with FtsZ.

It is found in the cytoplasm. Functionally, non-essential, abundant cell division factor that is required for proper Z-ring formation. It is recruited early to the divisome by direct interaction with FtsZ, stimulating Z-ring assembly and thereby promoting cell division earlier in the cell cycle. Its recruitment to the Z-ring requires functional FtsA or ZipA. The chain is Cell division protein ZapB from Serratia proteamaculans (strain 568).